We begin with the raw amino-acid sequence, 325 residues long: Putative metal ion transporter ZIPCO (325 aa).

3 helical membrane-spanning segments follow: residues 5–25 (TFLA…PAYI), 46–66 (IASG…VIIL), and 74–94 (LYYI…TDIL). N-linked (GlcNAc...) asparagine glycosylation is found at asparagine 106 and asparagine 160. 4 consecutive transmembrane segments (helical) span residues 179 to 199 (FFIV…MGSL), 239 to 259 (IYAW…IFSF), 264 to 284 (FVEI…SFNM), and 296 to 316 (HFIS…MILF).

It localises to the cytoplasmic vesicle membrane. In terms of biological role, putative transporter for the divalent zinc and iron cations. The sequence is that of Putative metal ion transporter ZIPCO from Plasmodium falciparum (isolate 3D7).